Consider the following 148-residue polypeptide: Glutamyl-tRNA(Gln) amidotransferase subunit C, mitochondrial (148 aa).

The N-terminal 10 residues, 1-10 (MLRLLNKRFY), are a transit peptide targeting the mitochondrion.

It belongs to the GatC family. As to quaternary structure, subunit of the heterotrimeric GatCAB amidotransferase (AdT) complex, composed of A, B and C subunits.

It localises to the mitochondrion. The enzyme catalyses L-glutamyl-tRNA(Gln) + L-glutamine + ATP + H2O = L-glutaminyl-tRNA(Gln) + L-glutamate + ADP + phosphate + H(+). Its function is as follows. Allows the formation of correctly charged Gln-tRNA(Gln) through the transamidation of misacylated Glu-tRNA(Gln) in the mitochondria. The reaction takes place in the presence of glutamine and ATP through an activated gamma-phospho-Glu-tRNA(Gln). This chain is Glutamyl-tRNA(Gln) amidotransferase subunit C, mitochondrial, found in Drosophila ananassae (Fruit fly).